The chain runs to 419 residues: Putative zinc metalloprotease SPs1691 (419 aa).

A Zn(2+)-binding site is contributed by His-18. The active site involves Glu-19. His-22 is a Zn(2+) binding site. 4 helical membrane passes run 169–191 (LITN…ILLV), 301–323 (LAWS…FSLN), 343–365 (LESV…LIPI), and 392–411 (AYIT…AVTW). The PDZ domain maps to 175–274 (GPMNNFILGI…LKTVAVKPQK (100 aa)).

This sequence belongs to the peptidase M50B family. It depends on Zn(2+) as a cofactor.

The protein resides in the cell membrane. The polypeptide is Putative zinc metalloprotease SPs1691 (eep) (Streptococcus pyogenes serotype M3 (strain SSI-1)).